Here is a 284-residue protein sequence, read N- to C-terminus: Release factor glutamine methyltransferase (284 aa).

S-adenosyl-L-methionine contacts are provided by residues 123-127 (GTGTG), Asp146, Trp174, and Asn189. 189-192 (NPPY) lines the substrate pocket.

It belongs to the protein N5-glutamine methyltransferase family. PrmC subfamily.

The catalysed reaction is L-glutaminyl-[peptide chain release factor] + S-adenosyl-L-methionine = N(5)-methyl-L-glutaminyl-[peptide chain release factor] + S-adenosyl-L-homocysteine + H(+). In terms of biological role, methylates the class 1 translation termination release factors RF1/PrfA and RF2/PrfB on the glutamine residue of the universally conserved GGQ motif. This Francisella tularensis subsp. tularensis (strain SCHU S4 / Schu 4) protein is Release factor glutamine methyltransferase.